The following is a 343-amino-acid chain: MKFSEIAQKLSPLVQSQSLTAYPDRNPQIKAITPIETALVDTISYIEGGKFASFVAKTDATALILPLDSNLQQQADERGIAWLASANPRLLFAHAIKLFYQPFQPQPYIHATAVVHPSAKIGHKVAIGAHAVVEANVTLGDGVCIHPNAVIYPGVHIGDRTILHANCTIHERVQIGNDCVIHSGAVIGAEGFGFVPVPEGWFKMEQSGIVVLEDGVEIGCNSTVDRPAVGETRIGSQTKIDNLVHIAHNCQIGQACALAGQVGMAGGVKLGNRVILAGQVGIANQAAIGDGAIATAQTGIHNDIGAGEVVSGSPAMPHKLFLKVAAAYKRLPEIYQAVKQLKK.

H248 serves as the catalytic Proton acceptor.

This sequence belongs to the transferase hexapeptide repeat family. LpxD subfamily. In terms of assembly, homotrimer.

It catalyses the reaction a UDP-3-O-[(3R)-3-hydroxyacyl]-alpha-D-glucosamine + a (3R)-hydroxyacyl-[ACP] = a UDP-2-N,3-O-bis[(3R)-3-hydroxyacyl]-alpha-D-glucosamine + holo-[ACP] + H(+). It participates in bacterial outer membrane biogenesis; LPS lipid A biosynthesis. Functionally, catalyzes the N-acylation of UDP-3-O-acylglucosamine using 3-hydroxyacyl-ACP as the acyl donor. Is involved in the biosynthesis of lipid A, a phosphorylated glycolipid that anchors the lipopolysaccharide to the outer membrane of the cell. The chain is UDP-3-O-acylglucosamine N-acyltransferase from Microcystis aeruginosa (strain NIES-843 / IAM M-2473).